The sequence spans 315 residues: 31 kDa ribonucleoprotein, chloroplastic (315 aa).

The transit peptide at 1 to 71 directs the protein to the chloroplast; it reads MSCATKPIIK…LSPKKKTSVS (71 aa). Residues 114–133 form a disordered region; the sequence is AGESDEVEADEEEEEFQEPP. The segment covering 115–133 has biased composition (acidic residues); it reads GESDEVEADEEEEEFQEPP. 2 consecutive RRM domains span residues 136 to 214 and 230 to 308; these read AKLF…KAAR and YRIY…VAED.

The protein localises to the plastid. It is found in the chloroplast. In terms of biological role, could be involved in splicing and/or processing of chloroplast RNA's. The protein is 31 kDa ribonucleoprotein, chloroplastic of Nicotiana sylvestris (Wood tobacco).